The primary structure comprises 445 residues: Exodeoxyribonuclease 7 large subunit (445 aa).

The protein belongs to the XseA family. Heterooligomer composed of large and small subunits.

Its subcellular location is the cytoplasm. It catalyses the reaction Exonucleolytic cleavage in either 5'- to 3'- or 3'- to 5'-direction to yield nucleoside 5'-phosphates.. In terms of biological role, bidirectionally degrades single-stranded DNA into large acid-insoluble oligonucleotides, which are then degraded further into small acid-soluble oligonucleotides. This is Exodeoxyribonuclease 7 large subunit from Xanthomonas oryzae pv. oryzae (strain KACC10331 / KXO85).